The following is a 516-amino-acid chain: uncharacterized protein (516 aa).

Positions 1–35 (MAERTSESSSESASFDLEKQQSNHHDRYQSSVSSE) are disordered. Residues 16–28 (DLEKQQSNHHDRY) show a composition bias toward basic and acidic residues. Ser31 carries the post-translational modification Phosphoserine. 12 helical membrane-spanning segments follow: residues 77–97 (VAVMGSACLCAGFGSSIFSGA), 111–131 (VALLGISLYVLGFASGPVVWA), 143–163 (MIIAVFIFCIFHIAVATAKDI), 166–186 (VMICRFFCGFFGSSPITTVAG), 198–218 (GLVIAVYSAIIFNGPLMSPIV), 231–251 (WTSYITAIMGFTAFTSMIIFH), 301–321 (LLIFEPILLVVSTYTAFVYGI), 345–365 (SLPYLAIFVGVCIGCSSVALF), 386–406 (LPSMMIGCIVFPIGIFWLAWT), 412–432 (IHWIVPTLAGSFIGFGIITIF), 439–461 (IIDCYSGCSASAIAANTLLRSSF), and 481–501 (AGSLVGFVAVGLIPVPFMLFL).

The protein belongs to the major facilitator superfamily.

It localises to the membrane. This is an uncharacterized protein from Schizosaccharomyces pombe (strain 972 / ATCC 24843) (Fission yeast).